A 380-amino-acid chain; its full sequence is Cytochrome b (380 aa).

4 helical membrane-spanning segments follow: residues 34-54 (FGSL…LLAM), 78-99 (WLIR…YLHI), 114-134 (WNTG…GYVL), and 179-199 (FFAL…IHLT). Residues His84 and His98 each contribute to the heme b site. Residues His183 and His197 each coordinate heme b. Residue His202 coordinates a ubiquinone. 4 helical membrane-spanning segments follow: residues 227-247 (LKDF…ALFT), 289-309 (LGGV…PFLH), 321-341 (LSQT…WIGS), and 348-368 (FITI…ILFP).

It belongs to the cytochrome b family. As to quaternary structure, the cytochrome bc1 complex contains 11 subunits: 3 respiratory subunits (MT-CYB, CYC1 and UQCRFS1), 2 core proteins (UQCRC1 and UQCRC2) and 6 low-molecular weight proteins (UQCRH/QCR6, UQCRB/QCR7, UQCRQ/QCR8, UQCR10/QCR9, UQCR11/QCR10 and a cleavage product of UQCRFS1). This cytochrome bc1 complex then forms a dimer. It depends on heme b as a cofactor.

It is found in the mitochondrion inner membrane. Its function is as follows. Component of the ubiquinol-cytochrome c reductase complex (complex III or cytochrome b-c1 complex) that is part of the mitochondrial respiratory chain. The b-c1 complex mediates electron transfer from ubiquinol to cytochrome c. Contributes to the generation of a proton gradient across the mitochondrial membrane that is then used for ATP synthesis. This chain is Cytochrome b (MT-CYB), found in Coracias caudatus (Lilac-breasted roller).